Here is a 134-residue protein sequence, read N- to C-terminus: Small ribosomal subunit protein uS9 (134 aa).

A disordered region spans residues 109–134; it reads DARRTEPHKPSKSSKGPRARRQKSYR. Residues 118 to 134 show a composition bias toward basic residues; that stretch reads PSKSSKGPRARRQKSYR.

It belongs to the universal ribosomal protein uS9 family.

The polypeptide is Small ribosomal subunit protein uS9 (Methanococcus vannielii (strain ATCC 35089 / DSM 1224 / JCM 13029 / OCM 148 / SB)).